Here is a 362-residue protein sequence, read N- to C-terminus: UDP-N-acetylglucosamine--N-acetylmuramyl-(pentapeptide) pyrophosphoryl-undecaprenol N-acetylglucosamine transferase (362 aa).

UDP-N-acetyl-alpha-D-glucosamine contacts are provided by residues 15-17 (TGG), asparagine 127, arginine 165, serine 191, isoleucine 247, 266-271 (ALTVSE), and glutamine 292.

This sequence belongs to the glycosyltransferase 28 family. MurG subfamily.

It localises to the cell inner membrane. The catalysed reaction is di-trans,octa-cis-undecaprenyl diphospho-N-acetyl-alpha-D-muramoyl-L-alanyl-D-glutamyl-meso-2,6-diaminopimeloyl-D-alanyl-D-alanine + UDP-N-acetyl-alpha-D-glucosamine = di-trans,octa-cis-undecaprenyl diphospho-[N-acetyl-alpha-D-glucosaminyl-(1-&gt;4)]-N-acetyl-alpha-D-muramoyl-L-alanyl-D-glutamyl-meso-2,6-diaminopimeloyl-D-alanyl-D-alanine + UDP + H(+). It participates in cell wall biogenesis; peptidoglycan biosynthesis. In terms of biological role, cell wall formation. Catalyzes the transfer of a GlcNAc subunit on undecaprenyl-pyrophosphoryl-MurNAc-pentapeptide (lipid intermediate I) to form undecaprenyl-pyrophosphoryl-MurNAc-(pentapeptide)GlcNAc (lipid intermediate II). This Shewanella oneidensis (strain ATCC 700550 / JCM 31522 / CIP 106686 / LMG 19005 / NCIMB 14063 / MR-1) protein is UDP-N-acetylglucosamine--N-acetylmuramyl-(pentapeptide) pyrophosphoryl-undecaprenol N-acetylglucosamine transferase.